A 159-amino-acid polypeptide reads, in one-letter code: Phosphopantetheine adenylyltransferase (159 aa).

Substrate is bound at residue Thr10. Residues 10 to 11 and His18 each bind ATP; that span reads TF. 3 residues coordinate substrate: Lys42, Met74, and Arg88. Residues 89 to 91, Glu99, and 124 to 130 contribute to the ATP site; these read GLR and WSFISSS.

This sequence belongs to the bacterial CoaD family. In terms of assembly, homohexamer. Requires Mg(2+) as cofactor.

The protein localises to the cytoplasm. It catalyses the reaction (R)-4'-phosphopantetheine + ATP + H(+) = 3'-dephospho-CoA + diphosphate. Its pathway is cofactor biosynthesis; coenzyme A biosynthesis; CoA from (R)-pantothenate: step 4/5. Functionally, reversibly transfers an adenylyl group from ATP to 4'-phosphopantetheine, yielding dephospho-CoA (dPCoA) and pyrophosphate. The sequence is that of Phosphopantetheine adenylyltransferase from Yersinia pseudotuberculosis serotype O:3 (strain YPIII).